We begin with the raw amino-acid sequence, 508 residues long: MKLYSLLSVFLVILLATSDSDAFTRNNFPKDFLFGAATSAYQWEGAVAEDGRTPSVWDTFSHTYNRGNLGNGDITSDGYHKYKEDVKLMAEMGLESFRFSISWSRLIPNGRGLINPKGLLFYKNLIKELISHGIEPHVTLYHYDLPQSLEDEYGGWINRKIIEDFTAYADVCFREFGEDVKLWTTINEATIFAIGSYDQGISPPGHCSPNKFINCTSGNSSTEPYLAGHNILLAHASASKLYKLKYKSTQKGSIGLSIFAFGLSPYTNSKDDEIATQRAKAFFYGWMLKPLVFGDYPDEMKRTVGSRLPVFSEEESEQLKGSSDFIGIIHYTTFYVTNKPSPSIFPSMNEGFFKDMGVYMISAANSSFLLWEATPWGLEGILEYIKQSYNNPPIYILENGMPMGRDSTLQDTQRIEFIQAYIGAMLNAIKNGSDTRGYFVWSMIDLYELLSGYTTSFGMYYVNFSDPGRKRTPKLSASWYTGFLNGTIDVATQDTIQLQSNISGSSSL.

The N-terminal stretch at 1–22 (MKLYSLLSVFLVILLATSDSDA) is a signal peptide. Residues Q42, H142, and 187 to 188 (NE) contribute to the a beta-D-glucoside site. Catalysis depends on E188, which acts as the Proton donor. C207 and C215 form a disulfide bridge. Residues N214 and N219 are each glycosylated (N-linked (GlcNAc...) asparagine). Residue Y331 participates in a beta-D-glucoside binding. Residue N365 is glycosylated (N-linked (GlcNAc...) asparagine). E398 provides a ligand contact to a beta-D-glucoside. E398 functions as the Nucleophile in the catalytic mechanism. N431 carries N-linked (GlcNAc...) asparagine glycosylation. Residues W441 and F457 each coordinate a beta-D-glucoside. Residues N463, N485, and N501 are each glycosylated (N-linked (GlcNAc...) asparagine).

It belongs to the glycosyl hydrolase 1 family.

It carries out the reaction Hydrolysis of terminal, non-reducing beta-D-glucosyl residues with release of beta-D-glucose.. The sequence is that of Beta-glucosidase 10 from Arabidopsis thaliana (Mouse-ear cress).